Reading from the N-terminus, the 140-residue chain is MIVIYHNPDCGTSRNVLQLIEAAGYLPQVIEYVKEGWTKPQLLGLFAAADLTPRSALRTTKSPAAELNLLEETVTDAQILDAMVEYPILVNRPIVCTPKGVRLCRPSEVVLDLLDHWPSGPFAKEDGELIIDERGNRVYT.

The active-site Nucleophile; cysteine thioarsenate intermediate is the cysteine 10.

It belongs to the ArsC family.

It catalyses the reaction [glutaredoxin]-dithiol + arsenate + glutathione + H(+) = glutathionyl-S-S-[glutaredoxin] + arsenite + H2O. Catalyzes the reduction of arsenate [As(V)] to arsenite [As(III)]. Does not constitute the major arsenate reductase in cells: essential only in the absence of ArsC (AC P74313). This is Arsenate reductase ArsI2 from Synechocystis sp. (strain ATCC 27184 / PCC 6803 / Kazusa).